The sequence spans 992 residues: UPF0182 protein Mb3215c (992 aa).

A run of 7 helical transmembrane segments spans residues 17 to 39, 59 to 81, 113 to 135, 169 to 191, 212 to 229, 255 to 277, and 284 to 306; these read RILI…LIDA, LATR…FGGL, LVGI…SYWA, LMLS…AHYI, LVSL…AYWL, VLPA…FSAI, and IPAI…WPLI. Residues 906–938 form a disordered region; the sequence is PTEAAVPPSPAANPPPPASGPQPPPVTAAPPVP. Over residues 912–938 the composition is skewed to pro residues; that stretch reads PPSPAANPPPPASGPQPPPVTAAPPVP.

It belongs to the UPF0182 family.

It is found in the cell membrane. This Mycobacterium bovis (strain ATCC BAA-935 / AF2122/97) protein is UPF0182 protein Mb3215c.